The primary structure comprises 63 residues: Large ribosomal subunit protein uL30 (63 aa).

Belongs to the universal ribosomal protein uL30 family. In terms of assembly, part of the 50S ribosomal subunit.

The chain is Large ribosomal subunit protein uL30 from Rickettsia typhi (strain ATCC VR-144 / Wilmington).